Here is a 769-residue protein sequence, read N- to C-terminus: Transferrin receptor protein 1 (769 aa).

Residues 1 to 70 (MMDQARSAFS…KPKRFNGFIC (70 aa)) lie on the Cytoplasmic side of the membrane. Positions 1 to 70 (MMDQARSAFS…KPKRFNGFIC (70 aa)) are mediates interaction with SH3BP4. Phosphoserine is present on residues Ser-10 and Ser-19. Tyr-20 is modified (phosphotyrosine). Residues 20 to 23 (YTRF) carry the Endocytosis signal motif. Thr-21 carries the post-translational modification Phosphothreonine. Ser-24 carries the post-translational modification Phosphoserine. Positions 61 to 64 (KPKR) match the Stop-transfer sequence motif. Residue Cys-70 is the site of S-palmitoyl cysteine attachment. Residues 71-91 (YGTIAIILFFLIGFMIGYLGY) form a helical; Signal-anchor for type II membrane protein membrane-spanning segment. The Extracellular portion of the chain corresponds to 92–769 (CKRVEAKSEC…GDIWDIDNEF (678 aa)). The O-linked (GalNAc...) threonine glycan is linked to Thr-107. Positions 232 to 322 (SKAATVTGRL…GTGDPYTPGF (91 aa)) constitute a PA domain. 2 N-linked (GlcNAc...) asparagine glycosylation sites follow: Asn-260 and Asn-326. Positions 578–769 (TMDVYEKLIQ…GDIWDIDNEF (192 aa)) are ligand-binding. The Cell attachment site signature appears at 655-657 (RGD). Residues Asn-731 and Asn-736 are each glycosylated (N-linked (GlcNAc...) asparagine).

The protein belongs to the peptidase M28 family. M28B subfamily. As to quaternary structure, homodimer; disulfide-linked. Binds one transferrin molecule per subunit. Interacts with SH3BP4. Homodimer; disulfide-linked. Binds one transferrin or HFE molecule per subunit. Binds the HLA class II histocompatibility antigen, DR1. Interacts with SH3BP3. Interacts with STEAP3; facilitates TFRC endocytosis in erythroid precursor cells. In terms of processing, stearoylated by ZDHHC6 which inhibits TFRC-mediated activation of the JNK pathway and promotes mitochondrial fragmentation. Stearoylation does not affect iron uptake. Post-translationally, N- and O-glycosylated, phosphorylated and palmitoylated.

It is found in the cell membrane. It localises to the melanosome. Cellular uptake of iron occurs via receptor-mediated endocytosis of ligand-occupied transferrin receptor into specialized endosomes. Endosomal acidification leads to iron release. The apotransferrin-receptor complex is then recycled to the cell surface with a return to neutral pH and the concomitant loss of affinity of apotransferrin for its receptor. Transferrin receptor is necessary for development of erythrocytes and the nervous system. Positively regulates T and B cell proliferation through iron uptake. Acts as a lipid sensor that regulates mitochondrial fusion by regulating activation of the JNK pathway. When dietary levels of stearate (C18:0) are low, promotes activation of the JNK pathway, resulting in HUWE1-mediated ubiquitination and subsequent degradation of the mitofusin MFN2 and inhibition of mitochondrial fusion. When dietary levels of stearate (C18:0) are high, TFRC stearoylation inhibits activation of the JNK pathway and thus degradation of the mitofusin MFN2. Mediates uptake of NICOL1 into fibroblasts where it may regulate extracellular matrix production. This Felis catus (Cat) protein is Transferrin receptor protein 1 (TFRC).